We begin with the raw amino-acid sequence, 618 residues long: Elongation factor 4 (618 aa).

The tr-type G domain maps to 17-198; sequence AIIRNFCIIA…KIVRDLPAPE (182 aa). GTP is bound by residues 29–34 and 145–148; these read DHGKST and NKID.

It belongs to the TRAFAC class translation factor GTPase superfamily. Classic translation factor GTPase family. LepA subfamily.

The protein resides in the cell membrane. The enzyme catalyses GTP + H2O = GDP + phosphate + H(+). In terms of biological role, required for accurate and efficient protein synthesis under certain stress conditions. May act as a fidelity factor of the translation reaction, by catalyzing a one-codon backward translocation of tRNAs on improperly translocated ribosomes. Back-translocation proceeds from a post-translocation (POST) complex to a pre-translocation (PRE) complex, thus giving elongation factor G a second chance to translocate the tRNAs correctly. Binds to ribosomes in a GTP-dependent manner. This Pseudarthrobacter chlorophenolicus (strain ATCC 700700 / DSM 12829 / CIP 107037 / JCM 12360 / KCTC 9906 / NCIMB 13794 / A6) (Arthrobacter chlorophenolicus) protein is Elongation factor 4.